The chain runs to 126 residues: Holo-[acyl-carrier-protein] synthase (126 aa).

2 residues coordinate Mg(2+): D9 and E58.

Belongs to the P-Pant transferase superfamily. AcpS family. It depends on Mg(2+) as a cofactor.

The protein localises to the cytoplasm. The enzyme catalyses apo-[ACP] + CoA = holo-[ACP] + adenosine 3',5'-bisphosphate + H(+). In terms of biological role, transfers the 4'-phosphopantetheine moiety from coenzyme A to a Ser of acyl-carrier-protein. The sequence is that of Holo-[acyl-carrier-protein] synthase from Buchnera aphidicola subsp. Schizaphis graminum (strain Sg).